Reading from the N-terminus, the 192-residue chain is UPF0312 protein PSPTO_5071 (192 aa).

An N-terminal signal peptide occupies residues 1 to 23 (MLKKSLAALALGTALLSAGQAMA).

The protein belongs to the UPF0312 family. Type 1 subfamily.

The protein resides in the periplasm. This is UPF0312 protein PSPTO_5071 from Pseudomonas syringae pv. tomato (strain ATCC BAA-871 / DC3000).